The primary structure comprises 412 residues: Adenosine receptor A2a (412 aa).

The Extracellular segment spans residues 1 to 7; it reads MSTMGSW. Residues 8–32 form a helical membrane-spanning segment; it reads VYITVELAIAVLAILGNVLVCWAVW. The Cytoplasmic segment spans residues 33–42; it reads LNSNLQNVTN. A helical transmembrane segment spans residues 43-66; it reads YFVVSLAAADIAVGVLAIPFAITI. The Extracellular segment spans residues 67 to 77; sequence STGFCAACHNC. Cystine bridges form between Cys71–Cys159, Cys74–Cys146, and Cys77–Cys166. The chain crosses the membrane as a helical span at residues 78–100; sequence LFFACFVLVLTQSSIFSLLAIAI. The Cytoplasmic portion of the chain corresponds to 101-120; the sequence is DRYIAIRIPLRYNGLVTGTR. The helical transmembrane segment at 121-143 threads the bilayer; that stretch reads AKGIIAVCWVLSFAIGLTPMLGW. The Extracellular segment spans residues 144–173; the sequence is NNCSQPKEGRNYSQGCGEGQVACLFEDVVP. Residues Asn145 and Asn154 are each glycosylated (N-linked (GlcNAc...) asparagine). Glu169 contacts adenosine. Residues 174 to 198 form a helical membrane-spanning segment; it reads MNYMVYYNFFAFVLVPLLLMLGVYL. The Cytoplasmic portion of the chain corresponds to 199–234; the sequence is RIFLAARRQLKQMESQPLPGERARSTLQKEVHAAKS. A helical transmembrane segment spans residues 235–258; it reads LAIIVGLFALCWLPLHIINCFTFF. Asn253 provides a ligand contact to adenosine. Cys259 and Cys262 are joined by a disulfide. At 259–266 the chain is on the extracellular side; the sequence is CPECSHAP. The helical transmembrane segment at 267–290 threads the bilayer; that stretch reads LWLMYLTIVLSHTNSVVNPFIYAY. Residues Ser277 and His278 each contribute to the adenosine site. At 291–412 the chain is on the cytoplasmic side; sequence RIREFRQTFR…PLAQDGAGVS (122 aa). The tract at residues 392-412 is disordered; that stretch reads GACPESPGLEGPLAQDGAGVS.

It belongs to the G-protein coupled receptor 1 family. In terms of assembly, interacts (via cytoplasmic C-terminal domain) with USP4; the interaction is direct. May interact with DRD4. Interacts with NECAB2. Interacts (via cytoplasmic C-terminal domain) with GAS2L2; interaction enhances receptor-mediated adenylyl cyclase activity. Ubiquitinated. Deubiquitinated by USP4; leading to stabilization and expression at the cell surface.

It is found in the cell membrane. Its function is as follows. Receptor for adenosine. The activity of this receptor is mediated by G proteins which activate adenylyl cyclase. This Canis lupus familiaris (Dog) protein is Adenosine receptor A2a (ADORA2A).